We begin with the raw amino-acid sequence, 97 residues long: Nucleoid-associated protein HPP12_0031 (97 aa).

Belongs to the YbaB/EbfC family. As to quaternary structure, homodimer.

The protein resides in the cytoplasm. It localises to the nucleoid. Binds to DNA and alters its conformation. May be involved in regulation of gene expression, nucleoid organization and DNA protection. This Helicobacter pylori (strain P12) protein is Nucleoid-associated protein HPP12_0031.